The following is a 303-amino-acid chain: Quinolinate synthase (303 aa).

Iminosuccinate-binding residues include H24 and S41. C86 provides a ligand contact to [4Fe-4S] cluster. Residues 112 to 114 and S129 each bind iminosuccinate; that span reads YIN. Residue C172 participates in [4Fe-4S] cluster binding. Iminosuccinate contacts are provided by residues 198–200 and T215; that span reads HPE. Position 260 (C260) interacts with [4Fe-4S] cluster.

The protein belongs to the quinolinate synthase family. Type 2 subfamily. [4Fe-4S] cluster serves as cofactor.

Its subcellular location is the cytoplasm. It carries out the reaction iminosuccinate + dihydroxyacetone phosphate = quinolinate + phosphate + 2 H2O + H(+). Its pathway is cofactor biosynthesis; NAD(+) biosynthesis; quinolinate from iminoaspartate: step 1/1. Its function is as follows. Catalyzes the condensation of iminoaspartate with dihydroxyacetone phosphate to form quinolinate. The sequence is that of Quinolinate synthase from Caldicellulosiruptor saccharolyticus (strain ATCC 43494 / DSM 8903 / Tp8T 6331).